The sequence spans 463 residues: ATP-dependent protease ATPase subunit HslU (463 aa).

Residues Val-21, 63-68 (GVGKTE), Asp-276, Glu-341, and Arg-413 each bind ATP.

This sequence belongs to the ClpX chaperone family. HslU subfamily. As to quaternary structure, a double ring-shaped homohexamer of HslV is capped on each side by a ring-shaped HslU homohexamer. The assembly of the HslU/HslV complex is dependent on binding of ATP.

It localises to the cytoplasm. Functionally, ATPase subunit of a proteasome-like degradation complex; this subunit has chaperone activity. The binding of ATP and its subsequent hydrolysis by HslU are essential for unfolding of protein substrates subsequently hydrolyzed by HslV. HslU recognizes the N-terminal part of its protein substrates and unfolds these before they are guided to HslV for hydrolysis. The protein is ATP-dependent protease ATPase subunit HslU of Thermotoga sp. (strain RQ2).